Reading from the N-terminus, the 243-residue chain is Small ribosomal subunit protein uS2c (243 aa).

The tract at residues 224–243 is disordered; it reads GNNGKVSSDQEDTQELQTVQ.

The protein belongs to the universal ribosomal protein uS2 family.

It localises to the plastid. The protein resides in the chloroplast. This Rhodomonas salina (Cryptomonas salina) protein is Small ribosomal subunit protein uS2c (rps2).